A 141-amino-acid chain; its full sequence is Hemoglobin subunit alpha-A (141 aa).

Residues 1–141 enclose the Globin domain; that stretch reads VLTEEDKSRV…VAKTLVSRYR (141 aa). Position 58 (histidine 58) interacts with O2. Histidine 87 is a heme b binding site.

Belongs to the globin family. Heterotetramer of two alpha chains and two beta chains. In terms of tissue distribution, red blood cells.

In terms of biological role, involved in oxygen transport from the lung to the various peripheral tissues. The chain is Hemoglobin subunit alpha-A from Drymarchon melanurus erebennus (Texas indigo snake).